The chain runs to 76 residues: Acyl carrier protein (76 aa).

Residues methionine 1–glutamine 76 form the Carrier domain. Position 36 is an O-(pantetheine 4'-phosphoryl)serine (serine 36).

Belongs to the acyl carrier protein (ACP) family. In terms of processing, 4'-phosphopantetheine is transferred from CoA to a specific serine of apo-ACP by AcpS. This modification is essential for activity because fatty acids are bound in thioester linkage to the sulfhydryl of the prosthetic group.

The protein resides in the cytoplasm. Its pathway is lipid metabolism; fatty acid biosynthesis. Its function is as follows. Carrier of the growing fatty acid chain in fatty acid biosynthesis. The polypeptide is Acyl carrier protein (Nitratidesulfovibrio vulgaris (strain DSM 19637 / Miyazaki F) (Desulfovibrio vulgaris)).